The primary structure comprises 951 residues: Multiple C2 and transmembrane domain-containing protein 1 (951 aa).

Disordered regions lie at residues 29–79 (LGVG…RWSG), 92–117 (SSSQ…AEQG), 129–198 (LPVA…QKSS), and 210–231 (LEPA…ALQK). Gly residues predominate over residues 31–43 (VGKGKGGGGGRAG). Positions 147 to 168 (PGGRSPDSAPSSSSASSSLSSS) are enriched in low complexity. Residues 174–184 (RGDRVRDESTR) show a composition bias toward basic and acidic residues. Residues 219 to 228 (PARGPAEPQA) show a composition bias toward low complexity. C2 domains lie at 240–358 (KIST…DVTL), 404–521 (QTQS…KLEL), and 555–676 (QKER…AYVL). Asp-275, Asp-281, Asp-328, Asp-330, Asp-336, Asp-438, Asp-444, Asp-491, Asp-493, Asp-499, Asp-594, Asp-600, Asp-646, Asp-648, and Asp-654 together coordinate Ca(2+). 2 helical membrane-spanning segments follow: residues 763 to 783 (FVLF…LLLL) and 866 to 886 (PFLS…LYFI).

It belongs to the MCTP family. The cofactor is Ca(2+).

The protein localises to the cytoplasmic vesicle. It is found in the secretory vesicle. The protein resides in the synaptic vesicle membrane. It localises to the recycling endosome. Its subcellular location is the endoplasmic reticulum membrane. Its function is as follows. Calcium sensor which is essential for the stabilization of normal baseline neurotransmitter release and for the induction and long-term maintenance of presynaptic homeostatic plasticity. This is Multiple C2 and transmembrane domain-containing protein 1 from Mus musculus (Mouse).